Here is a 632-residue protein sequence, read N- to C-terminus: tRNA uridine 5-carboxymethylaminomethyl modification enzyme MnmG (632 aa).

FAD-binding positions include 15-20, I127, and S182; that span reads GAGHAG. 276–290 contacts NAD(+); the sequence is GPRYCPSIEDKIVRF. Residue Q373 coordinates FAD.

This sequence belongs to the MnmG family. Homodimer. Heterotetramer of two MnmE and two MnmG subunits. Requires FAD as cofactor.

The protein resides in the cytoplasm. In terms of biological role, NAD-binding protein involved in the addition of a carboxymethylaminomethyl (cmnm) group at the wobble position (U34) of certain tRNAs, forming tRNA-cmnm(5)s(2)U34. This is tRNA uridine 5-carboxymethylaminomethyl modification enzyme MnmG from Streptococcus pyogenes serotype M1.